The chain runs to 266 residues: UPF0294 protein YafD (266 aa).

This sequence belongs to the UPF0294 family.

It localises to the cytoplasm. The chain is UPF0294 protein YafD from Salmonella paratyphi C (strain RKS4594).